Consider the following 359-residue polypeptide: Protein disulfide-isomerase tigA (359 aa).

An N-terminal signal peptide occupies residues Met1–Ala19. Thioredoxin domains lie at Ala20–Gly129 and Lys131–Gly250. Residues Cys49, Cys52, Cys169, and Cys172 each act as nucleophile in the active site. 2 disulfide bridges follow: Cys49–Cys52 and Cys169–Cys172. Residues Lys356–Leu359 carry the Prevents secretion from ER motif.

The protein belongs to the protein disulfide isomerase family.

It is found in the endoplasmic reticulum lumen. The enzyme catalyses Catalyzes the rearrangement of -S-S- bonds in proteins.. This Aspergillus niger protein is Protein disulfide-isomerase tigA (tigA).